A 271-amino-acid polypeptide reads, in one-letter code: Putative phosphoenolpyruvate synthase regulatory protein (271 aa).

Residue 152 to 159 coordinates ADP; that stretch reads GVSRCGKT.

It belongs to the pyruvate, phosphate/water dikinase regulatory protein family. PSRP subfamily.

The enzyme catalyses [pyruvate, water dikinase] + ADP = [pyruvate, water dikinase]-phosphate + AMP + H(+). The catalysed reaction is [pyruvate, water dikinase]-phosphate + phosphate + H(+) = [pyruvate, water dikinase] + diphosphate. Its function is as follows. Bifunctional serine/threonine kinase and phosphorylase involved in the regulation of the phosphoenolpyruvate synthase (PEPS) by catalyzing its phosphorylation/dephosphorylation. This is Putative phosphoenolpyruvate synthase regulatory protein from Legionella pneumophila (strain Corby).